Consider the following 468-residue polypeptide: MKFTHLFFIGLLTKVYTETVTVLSTRSYRLATTESTPTDGTVYLTLTRQQSSSTSLNASTITTPPSNSSASVQTTAVTDCHFHNSVQYCVDGYGNEGSILPVPTNTNNLPTSYDGCHSHDGDTFCMDGDKEVQFVKLEDEDDEESSSSSGKKCHFHAGVEHCVDDNNHDAVTCERVKRDYDIPLRIGLLFVILVTSGIGSFGPIVLKQFVNLSQENYIIVIIKQFGTGIIISTAFVHLMTHAQLMWSNSCLKIKYEGTGASITMAGIFIAFIIEYIALRIVNARDTGKVDKKEIEETSSNEQSLHGISVNDKISVMILEAGIIFHSILIGITLVVTDDVYFITLFIVIVFHQFFEGLALSSRIISITNASLSTKLVMALMFALITPIGMAIGIGVLNKFNGNDPSTLIALGTLDSFSAGVLLWTGLIEMWSHDWLHGHLRNSSFVKTTVALVSLILGMLLMSLLGNWA.

Residues 1–17 form the signal peptide; that stretch reads MKFTHLFFIGLLTKVYT. At 18–185 the chain is on the extracellular side; that stretch reads ETVTVLSTRS…VKRDYDIPLR (168 aa). Asn57 and Asn67 each carry an N-linked (GlcNAc...) asparagine glycan. Residues 186-206 traverse the membrane as a helical segment; the sequence is IGLLFVILVTSGIGSFGPIVL. Residues 207–217 are Cytoplasmic-facing; the sequence is KQFVNLSQENY. Residues 218–238 form a helical membrane-spanning segment; sequence IIVIIKQFGTGIIISTAFVHL. Topologically, residues 239 to 257 are extracellular; it reads MTHAQLMWSNSCLKIKYEG. A helical membrane pass occupies residues 258–278; it reads TGASITMAGIFIAFIIEYIAL. Residues 279-314 are Cytoplasmic-facing; it reads RIVNARDTGKVDKKEIEETSSNEQSLHGISVNDKIS. The chain crosses the membrane as a helical span at residues 315–335; the sequence is VMILEAGIIFHSILIGITLVV. At 336–338 the chain is on the extracellular side; sequence TDD. The chain crosses the membrane as a helical span at residues 339–359; it reads VYFITLFIVIVFHQFFEGLAL. The Cytoplasmic segment spans residues 360–374; it reads SSRIISITNASLSTK. The helical transmembrane segment at 375-395 threads the bilayer; it reads LVMALMFALITPIGMAIGIGV. Residues 396–406 are Extracellular-facing; it reads LNKFNGNDPST. The chain crosses the membrane as a helical span at residues 407 to 427; that stretch reads LIALGTLDSFSAGVLLWTGLI. Residues 428 to 447 are Cytoplasmic-facing; the sequence is EMWSHDWLHGHLRNSSFVKT. Residues 448–468 form a helical membrane-spanning segment; that stretch reads TVALVSLILGMLLMSLLGNWA.

Belongs to the ZIP transporter (TC 2.A.5) family.

The protein resides in the cell membrane. The enzyme catalyses Zn(2+)(in) = Zn(2+)(out). In terms of biological role, zinc transporter that acts with PRA1 in sequestration of zinc from host tissues during infection. The pH-regulated antigen 1 (PRA1) binds zinc from its environment and then reassociates with ZRT1 to acquire this essential metal. The sequence is that of Zinc-regulated transporter 1 (ZRT101) from Candida albicans (strain SC5314 / ATCC MYA-2876) (Yeast).